Reading from the N-terminus, the 178-residue chain is MGAFRFHQYQVVGRGLPTPTDEHPKIYRMKLWATNEVRAKSKFWYFLRKLKKVKKSNGQILAINEIFEKNPTTIKNYGIWLRYQSRTGYHNMYKEYRDTTLNGAVEQMYTEMASRHRVRFPCIQIIKTATVHFKLCKRDNTKQFHKSDIKFPLVYRKVRPPTRKLKTTFKASRPNLFM.

The protein belongs to the eukaryotic ribosomal protein eL20 family.

The sequence is that of Large ribosomal subunit protein eL20 (RPL18A) from Oryza sativa subsp. japonica (Rice).